Reading from the N-terminus, the 461-residue chain is Cysteine--tRNA ligase (461 aa).

Cysteine 28 serves as a coordination point for Zn(2+). The 'HIGH' region signature appears at 30–40; that stretch reads ITVYDLCHIGH. 3 residues coordinate Zn(2+): cysteine 209, histidine 234, and glutamate 238. The short motif at 266 to 270 is the 'KMSKS' region element; sequence KMSKS. Lysine 269 provides a ligand contact to ATP.

The protein belongs to the class-I aminoacyl-tRNA synthetase family. As to quaternary structure, monomer. Zn(2+) is required as a cofactor.

Its subcellular location is the cytoplasm. It carries out the reaction tRNA(Cys) + L-cysteine + ATP = L-cysteinyl-tRNA(Cys) + AMP + diphosphate. This Escherichia coli O17:K52:H18 (strain UMN026 / ExPEC) protein is Cysteine--tRNA ligase.